A 283-amino-acid chain; its full sequence is NAD kinase (283 aa).

Asp73 acts as the Proton acceptor in catalysis. Residues 73–74, 146–147, His157, His176, Asp178, 189–194, and Ala213 contribute to the NAD(+) site; these read DG, NE, and TAYNLS.

This sequence belongs to the NAD kinase family. The cofactor is a divalent metal cation.

The protein localises to the cytoplasm. The catalysed reaction is NAD(+) + ATP = ADP + NADP(+) + H(+). Involved in the regulation of the intracellular balance of NAD and NADP, and is a key enzyme in the biosynthesis of NADP. Catalyzes specifically the phosphorylation on 2'-hydroxyl of the adenosine moiety of NAD to yield NADP. This is NAD kinase from Haloarcula marismortui (strain ATCC 43049 / DSM 3752 / JCM 8966 / VKM B-1809) (Halobacterium marismortui).